Here is a 293-residue protein sequence, read N- to C-terminus: Forkhead box protein N5 (293 aa).

Residues T104–R152 form a disordered region. Over residues P106–S119 the composition is skewed to polar residues. Residues R176 to L273 constitute a DNA-binding region (fork-head).

The protein localises to the nucleus. The chain is Forkhead box protein N5 from Xenopus tropicalis (Western clawed frog).